Reading from the N-terminus, the 95-residue chain is NADH-quinone oxidoreductase subunit K (95 aa).

3 consecutive transmembrane segments (helical) span residues 1-21 (MSYL…VLTR), 25-45 (ILVF…LVGF), and 59-79 (MVIA…VAIF).

It belongs to the complex I subunit 4L family. As to quaternary structure, NDH-1 is composed of 15 different subunits. Subunits NuoA, H, J, K, L, M, N constitute the membrane sector of the complex.

It localises to the cell inner membrane. It catalyses the reaction a quinone + NADH + 5 H(+)(in) = a quinol + NAD(+) + 4 H(+)(out). Its function is as follows. NDH-1 shuttles electrons from NADH, via FMN and iron-sulfur (Fe-S) centers, to quinones in the respiratory chain. The immediate electron acceptor for the enzyme in this species is believed to be a menaquinone. Couples the redox reaction to proton translocation (for every two electrons transferred, four hydrogen ions are translocated across the cytoplasmic membrane), and thus conserves the redox energy in a proton gradient. The chain is NADH-quinone oxidoreductase subunit K from Thermus thermophilus (strain ATCC BAA-163 / DSM 7039 / HB27).